A 353-amino-acid chain; its full sequence is Holliday junction branch migration complex subunit RuvB (353 aa).

Positions 4–185 (ADRLITATGG…FGIVQRLEFY (182 aa)) are large ATPase domain (RuvB-L). ATP contacts are provided by residues Ile-24, Arg-25, Gly-66, Lys-69, Thr-70, Thr-71, 132 to 134 (EDF), Arg-175, Tyr-185, and Arg-222. Thr-70 contacts Mg(2+). The interval 186–256 (NIADLSTIVS…TADKALNLLD (71 aa)) is small ATPAse domain (RuvB-S). Positions 259-353 (EHGFDHQDRR…DDFGDEPVDL (95 aa)) are head domain (RuvB-H). DNA is bound by residues Arg-295, Arg-314, and Arg-319.

Belongs to the RuvB family. As to quaternary structure, homohexamer. Forms an RuvA(8)-RuvB(12)-Holliday junction (HJ) complex. HJ DNA is sandwiched between 2 RuvA tetramers; dsDNA enters through RuvA and exits via RuvB. An RuvB hexamer assembles on each DNA strand where it exits the tetramer. Each RuvB hexamer is contacted by two RuvA subunits (via domain III) on 2 adjacent RuvB subunits; this complex drives branch migration. In the full resolvosome a probable DNA-RuvA(4)-RuvB(12)-RuvC(2) complex forms which resolves the HJ.

It localises to the cytoplasm. It carries out the reaction ATP + H2O = ADP + phosphate + H(+). In terms of biological role, the RuvA-RuvB-RuvC complex processes Holliday junction (HJ) DNA during genetic recombination and DNA repair, while the RuvA-RuvB complex plays an important role in the rescue of blocked DNA replication forks via replication fork reversal (RFR). RuvA specifically binds to HJ cruciform DNA, conferring on it an open structure. The RuvB hexamer acts as an ATP-dependent pump, pulling dsDNA into and through the RuvAB complex. RuvB forms 2 homohexamers on either side of HJ DNA bound by 1 or 2 RuvA tetramers; 4 subunits per hexamer contact DNA at a time. Coordinated motions by a converter formed by DNA-disengaged RuvB subunits stimulates ATP hydrolysis and nucleotide exchange. Immobilization of the converter enables RuvB to convert the ATP-contained energy into a lever motion, pulling 2 nucleotides of DNA out of the RuvA tetramer per ATP hydrolyzed, thus driving DNA branch migration. The RuvB motors rotate together with the DNA substrate, which together with the progressing nucleotide cycle form the mechanistic basis for DNA recombination by continuous HJ branch migration. Branch migration allows RuvC to scan DNA until it finds its consensus sequence, where it cleaves and resolves cruciform DNA. In Pseudomonas syringae pv. syringae (strain B728a), this protein is Holliday junction branch migration complex subunit RuvB.